Consider the following 417-residue polypeptide: MFPRDARLDMYDPELAKAIAAEVRRQEDHVELIASENYCSTLVMQVQGSQLTNKYAEGYSGKRYYGGCEYVDIAEQLAIERAKQLFGADYANVQPHSGSQANQAVYFALLQPGDTILGMSLAHGGHLTHGANVNVSGKLFNAVQYGVNAQGLIDYEAVESLALEHRPKMVVAGFSAYSQKIDWVRFRAIADQVGAYLLVDMAHVAGLVAAGVYPNPLPHAHVVTSTTHKTLRGPRGGIIVAQAPQEALVKKLQSIVFPGIQGGPLMHVIAAKAVAFKEALEPAFKVYQQQVVKNAKAMAETLMLRGYKIVSGGTENHLMLVDMIGRDVSGRDAEGALGQAHITVNKNAVPDDPRSPFVTSGLRLGTPAVTTRGYQEQDCVDLAHWIADVLDAPADATVIAAVREKVAAQCKKYPVYR.

Residues L121 and G125–L127 each bind (6S)-5,6,7,8-tetrahydrofolate. N6-(pyridoxal phosphate)lysine is present on K229. A (6S)-5,6,7,8-tetrahydrofolate-binding site is contributed by S355–F357.

Belongs to the SHMT family. In terms of assembly, homodimer. It depends on pyridoxal 5'-phosphate as a cofactor.

The protein localises to the cytoplasm. The enzyme catalyses (6R)-5,10-methylene-5,6,7,8-tetrahydrofolate + glycine + H2O = (6S)-5,6,7,8-tetrahydrofolate + L-serine. It functions in the pathway one-carbon metabolism; tetrahydrofolate interconversion. Its pathway is amino-acid biosynthesis; glycine biosynthesis; glycine from L-serine: step 1/1. In terms of biological role, catalyzes the reversible interconversion of serine and glycine with tetrahydrofolate (THF) serving as the one-carbon carrier. This reaction serves as the major source of one-carbon groups required for the biosynthesis of purines, thymidylate, methionine, and other important biomolecules. Also exhibits THF-independent aldolase activity toward beta-hydroxyamino acids, producing glycine and aldehydes, via a retro-aldol mechanism. The sequence is that of Serine hydroxymethyltransferase from Xylella fastidiosa (strain M12).